A 229-amino-acid chain; its full sequence is Ribosomal RNA small subunit methyltransferase G (229 aa).

S-adenosyl-L-methionine is bound by residues G71, 122–123 (AE), and R139.

This sequence belongs to the methyltransferase superfamily. RNA methyltransferase RsmG family.

The protein localises to the cytoplasm. Functionally, specifically methylates the N7 position of a guanine in 16S rRNA. The sequence is that of Ribosomal RNA small subunit methyltransferase G from Thermotoga neapolitana (strain ATCC 49049 / DSM 4359 / NBRC 107923 / NS-E).